Reading from the N-terminus, the 430-residue chain is MEF2-activating motif and SAP domain-containing transcriptional regulator (430 aa).

The MEF2-binding motif lies at 12 to 28 (IIRSKFRSVLQLRIHRR). Disordered stretches follow at residues 84-172 (CWSL…PLPH), 204-239 (KSML…RFRP), 280-301 (VATT…APAS), and 330-416 (EDQV…DLSD). Residues 87–103 (LKKESPKTSQHWREPKP) show a composition bias toward basic and acidic residues. A compositionally biased stretch (pro residues) spans 147–170 (QPPPRMKPTPLTPSPPGVPSPSPL). Residues 181 to 215 (LEELTVSELRQQLRLRGLPVSGTKSMLLERMRGGA) form the SAP domain. Over residues 207–228 (LLERMRGGAPPRERPKARREDS) the composition is skewed to basic and acidic residues. A transcription activation region spans residues 224–430 (RREDSAAGAP…RLWDLLEDPW (207 aa)). 2 stretches are compositionally biased toward low complexity: residues 363–373 (SSVFSSSLPSP) and 393–403 (ALSGGPSLGCG).

Interacts with MEF2C.

The protein localises to the nucleus. Its function is as follows. Transcriptional coactivator. Stimulates the transcriptional activity of MEF2C. Stimulates MYOD1 activity in part via MEF2, resulting in an enhancement of skeletal muscle differentiation. This Bos taurus (Bovine) protein is MEF2-activating motif and SAP domain-containing transcriptional regulator (MAMSTR).